Consider the following 277-residue polypeptide: MSLLEAVILGLVQGITEFLPISSSAHLILVQALFGMTFAGFSFEILLHLASVLAVILYYRHDLIEIIRGFFAYFTKRTPQNKAMFWFAIYLVVATGITGVAGILFEDYISETFKAPIFIALALAVTGLFLIIIERFVRHGNRTEKEMTIWDSIIVGLGQCLALIPGLSRSGTTLIVGMFAGLTKETAVRFSFLLSIPVILGSSVLAIDDLISGDLLASTGLFELAASFVVTFIASWLGIVFFLNLVRKSKLVYFAVYCFIVAILVFIFQDALGHADI.

Helical transmembrane passes span 1–21 (MSLL…FLPI), 39–58 (AGFS…VILY), 85–105 (FWFA…GILF), 113–133 (FKAP…LIII), 147–167 (MTIW…IPGL), 191–211 (SFLL…DDLI), 226–246 (ASFV…LNLV), and 251–271 (LVYF…FQDA).

The protein belongs to the UppP family.

It is found in the cell membrane. It catalyses the reaction di-trans,octa-cis-undecaprenyl diphosphate + H2O = di-trans,octa-cis-undecaprenyl phosphate + phosphate + H(+). In terms of biological role, catalyzes the dephosphorylation of undecaprenyl diphosphate (UPP). Confers resistance to bacitracin. This chain is Undecaprenyl-diphosphatase 1, found in Shouchella clausii (strain KSM-K16) (Alkalihalobacillus clausii).